The sequence spans 391 residues: Glycerol-3-phosphate dehydrogenase [NAD(+)] (391 aa).

Residues 46-51, F78, and F134 each bind NAD(+); that span reads GSGNWG. A substrate-binding site is contributed by K157. A190 is an NAD(+) binding site. The Proton acceptor role is filled by K250. R315 and Q344 together coordinate NAD(+). 315-316 is a binding site for substrate; the sequence is RN.

The protein belongs to the NAD-dependent glycerol-3-phosphate dehydrogenase family.

It carries out the reaction sn-glycerol 3-phosphate + NAD(+) = dihydroxyacetone phosphate + NADH + H(+). This is Glycerol-3-phosphate dehydrogenase [NAD(+)] (GPD) from Candida tropicalis (Yeast).